The primary structure comprises 467 residues: Histidine--tRNA ligase (467 aa).

It belongs to the class-II aminoacyl-tRNA synthetase family. As to quaternary structure, homodimer.

Its subcellular location is the cytoplasm. The catalysed reaction is tRNA(His) + L-histidine + ATP = L-histidyl-tRNA(His) + AMP + diphosphate + H(+). The chain is Histidine--tRNA ligase from Gloeobacter violaceus (strain ATCC 29082 / PCC 7421).